A 335-amino-acid chain; its full sequence is Glycerol-3-phosphate dehydrogenase [NAD(P)+] (335 aa).

Tryptophan 15, arginine 36, and lysine 109 together coordinate NADPH. Lysine 109, glycine 137, and serine 139 together coordinate sn-glycerol 3-phosphate. Alanine 141 serves as a coordination point for NADPH. Sn-glycerol 3-phosphate-binding residues include lysine 192, aspartate 245, serine 255, arginine 256, and asparagine 257. Residue lysine 192 is the Proton acceptor of the active site. NADPH is bound at residue arginine 256. NADPH contacts are provided by leucine 279 and glutamate 281.

Belongs to the NAD-dependent glycerol-3-phosphate dehydrogenase family.

The protein resides in the cytoplasm. It catalyses the reaction sn-glycerol 3-phosphate + NAD(+) = dihydroxyacetone phosphate + NADH + H(+). The enzyme catalyses sn-glycerol 3-phosphate + NADP(+) = dihydroxyacetone phosphate + NADPH + H(+). It functions in the pathway membrane lipid metabolism; glycerophospholipid metabolism. Functionally, catalyzes the reduction of the glycolytic intermediate dihydroxyacetone phosphate (DHAP) to sn-glycerol 3-phosphate (G3P), the key precursor for phospholipid synthesis. The chain is Glycerol-3-phosphate dehydrogenase [NAD(P)+] from Beijerinckia indica subsp. indica (strain ATCC 9039 / DSM 1715 / NCIMB 8712).